Reading from the N-terminus, the 179-residue chain is Shikimate kinase (179 aa).

15 to 20 (GAGKTS) provides a ligand contact to ATP. T19 is a Mg(2+) binding site. 3 residues coordinate substrate: D37, R61, and G83. ATP is bound at residue R123. R142 provides a ligand contact to substrate.

It belongs to the shikimate kinase family. As to quaternary structure, monomer. Mg(2+) serves as cofactor.

The protein resides in the cytoplasm. The catalysed reaction is shikimate + ATP = 3-phosphoshikimate + ADP + H(+). The protein operates within metabolic intermediate biosynthesis; chorismate biosynthesis; chorismate from D-erythrose 4-phosphate and phosphoenolpyruvate: step 5/7. Functionally, catalyzes the specific phosphorylation of the 3-hydroxyl group of shikimic acid using ATP as a cosubstrate. The sequence is that of Shikimate kinase from Coxiella burnetii (strain CbuG_Q212) (Coxiella burnetii (strain Q212)).